The primary structure comprises 1407 residues: Trichohyalin (1407 aa).

The segment at 1–91 (MSPLLKSIID…AQAAYYALGQ (91 aa)) is S-100-like. 2 EF-hand domains span residues 23–48 (CDGAVLKKKDLKILLDREFGAVLQRP) and 49–84 (HDPETVDVMLELLDRDSDGLVGFDEFCLLIFKLAQA). Residues D32, D62, D64, D66, and E73 each coordinate Ca(2+). 7 disordered regions span residues 148-172 (EEEEQRKKRERFEQHYSRQYRDKEQ), 218-237 (LREEEQQRRERREQHERALQ), 362-471 (REQA…EEEQ), 486-587 (EQLQ…ERER), 1014-1033 (REEERLRRQERDRKFREEER), 1062-1082 (KEEKQLRRQERDRKFREEEQQ), and 1313-1407 (EQFA…QYRP). 4 stretches are compositionally biased toward basic and acidic residues: residues 362–381 (REQARERGESLTRRWQRQLE), 396–424 (RRQEEQSLRQDQERRQRQERERELEEQAR), 447–471 (SLRERQLRAEERQEQEQRFREEEEQ), and 554–587 (QREKRRQEREREYREEEKLQREEDEKRRRQERER). Residues 1313 to 1376 (EQFAREEKSR…FREDQSRRQV (64 aa)) are compositionally biased toward basic and acidic residues.

Belongs to the S100-fused protein family. As to quaternary structure, homodimer. Post-translationally, substrate of transglutaminase. Some 200 arginines are probably converted to citrullines by peptidylarginine deimidase. Found in the hard keratinizing tissues such as the inner root sheath (IRS) of hair follicles and medulla, and in the filiform papillae of dorsal tongue epithelium.

Functionally, intermediate filament-associated protein that associates in regular arrays with keratin intermediate filaments (KIF) of the inner root sheath cells of the hair follicle and the granular layer of the epidermis. It later becomes cross-linked to KIF by isodipeptide bonds. It may serve as scaffold protein, together with involucrin, in the organization of the cell envelope or even anchor the cell envelope to the KIF network. It may be involved in its own calcium-dependent postsynthetic processing during terminal differentiation. In Oryctolagus cuniculus (Rabbit), this protein is Trichohyalin (TCHH).